The following is a 241-amino-acid chain: Uridylate kinase (241 aa).

Position 15–18 (15–18 (KLSG)) interacts with ATP. Residues 23–28 (GAEGFG) are involved in allosteric activation by GTP. UMP is bound at residue G57. ATP-binding residues include G58 and R62. Residues D77 and 138-145 (TGNPFFTT) contribute to the UMP site. Positions 165, 171, and 174 each coordinate ATP.

It belongs to the UMP kinase family. As to quaternary structure, homohexamer.

Its subcellular location is the cytoplasm. The enzyme catalyses UMP + ATP = UDP + ADP. It functions in the pathway pyrimidine metabolism; CTP biosynthesis via de novo pathway; UDP from UMP (UMPK route): step 1/1. Its activity is regulated as follows. Allosterically activated by GTP. Inhibited by UTP. Its function is as follows. Catalyzes the reversible phosphorylation of UMP to UDP. This Serratia proteamaculans (strain 568) protein is Uridylate kinase.